The chain runs to 514 residues: Synaptic vesicular amine transporter (514 aa).

The Cytoplasmic portion of the chain corresponds to 1–20; that stretch reads MALSELALVRWLQESRRSRK. Residues 21-41 form a helical membrane-spanning segment; sequence LILFIVFLALLLDNMLLTVVV. The Lumenal, vesicle portion of the chain corresponds to 42–129; the sequence is PIIPSYLYSI…EDKDLLNENV (88 aa). N-linked (GlcNAc...) asparagine glycans are attached at residues Asn-84 and Asn-91. Cys-117 and Cys-324 form a disulfide bridge. A helical transmembrane segment spans residues 130-150; sequence QVGLLFASKATVQLITNPFIG. The Cytoplasmic portion of the chain corresponds to 151 to 159; it reads LLTNRIGYP. The helical transmembrane segment at 160–180 threads the bilayer; it reads IPIFAGFCIMFVSTIMFAFSS. Topologically, residues 181–189 are lumenal, vesicle; sequence SYAFLLIAR. Residues 190-210 form a helical membrane-spanning segment; it reads SLQGIGSSCSSVAGMGMLASV. At 211–219 the chain is on the cytoplasmic side; sequence YTDDEERGN. The chain crosses the membrane as a helical span at residues 220 to 242; sequence VMGIALGGLAMGVLVGPPFGSVL. The serotonin site is built by Leu-228 and Val-232. The Lumenal, vesicle segment spans residues 243–248; it reads YEFVGK. A helical transmembrane segment spans residues 249 to 271; the sequence is TAPFLVLAALVLLDGAIQLFVLQ. Topologically, residues 272–291 are cytoplasmic; sequence PSRVQPESQKGTPLTTLLKD. Residues 292 to 311 form a helical membrane-spanning segment; that stretch reads PYILIAAGSICFANMGIAML. 5 residues coordinate serotonin: Asn-305, Ile-308, Glu-312, Phe-334, and Tyr-341. At 312–328 the chain is on the lumenal, vesicle side; that stretch reads EPALPIWMMETMCSRKW. The chain crosses the membrane as a helical span at residues 329-352; it reads QLGVAFLPASISYLIGTNIFGILA. The Cytoplasmic segment spans residues 353-357; it reads HKMGR. Residues 358-378 form a helical membrane-spanning segment; it reads WLCALLGMIIVGVSILCIPFA. The Lumenal, vesicle segment spans residues 379 to 389; it reads KNIYGLIAPNF. Residues 390–410 traverse the membrane as a helical segment; it reads GVGFAIGMVDSSMMPIMGYLV. Asp-399 serves as a coordination point for serotonin. The Cytoplasmic segment spans residues 411 to 414; the sequence is DLRH. A helical transmembrane segment spans residues 415-435; it reads VSVYGSVYAIADVAFCMGYAI. Tyr-433 lines the serotonin pocket. Residues 436 to 440 are Lumenal, vesicle-facing; sequence GPSAG. The chain crosses the membrane as a helical span at residues 441–462; that stretch reads GAIAKAIGFPWLMTIIGIIDIL. The Cytoplasmic segment spans residues 463-514; the sequence is FAPLCFFLRSPPAKEEKMAILMDHNCPIKTKMYTQNNIQSYPIGEDEESESD. Phosphoserine is present on residues Ser-511 and Ser-513.

It belongs to the major facilitator superfamily. Vesicular transporter family. In terms of assembly, interacts with SLC6A3. As to expression, expressed in neuronal and neuroendocrine tissues. Detected in central and peripheral nervous system in particular in axonal and dendritic processes in dopaminergic cells of substantia nigra, histaminergic neuronal cell bodies of substantia nigra and tuberomammillary nucleus, in ganglion cells of sympathetic glia and in peripheral sympathetic nerve terminals in stomach and duodenum (at protein level). Highly expressed in chromaffin cells of the adrenal medulla and histamine-storing enterochromaffin-like cells of oxyntic mucosa (at protein level).

It is found in the cytoplasmic vesicle. The protein resides in the secretory vesicle. Its subcellular location is the synaptic vesicle membrane. The protein localises to the secretory vesicle membrane. It localises to the cell projection. It is found in the axon. The protein resides in the dendrite. The catalysed reaction is serotonin(in) + 2 H(+)(out) = serotonin(out) + 2 H(+)(in). The enzyme catalyses dopamine(in) + 2 H(+)(out) = dopamine(out) + 2 H(+)(in). It carries out the reaction histamine(in) + 2 H(+)(out) = histamine(out) + 2 H(+)(in). With respect to regulation, strongly inhibited by reserpine and tetrabenazine. Also inhibited to a lesser extent by ketanserin and fenfluramine. Reserpine and ketanserin inhibit by blocking the substrate-binding pocket. Tetrabenazine traps SLC18A2/VMAT2 in an occluded conformation and its inhibition is specific to SLC18A2/VMAT2 but not SLC18A1/VMAT1. Electrogenic antiporter that exchanges one cationic monoamine with two intravesicular protons across the membrane of secretory and synaptic vesicles. Uses the electrochemical proton gradient established by the V-type proton-pump ATPase to accumulate high concentrations of monoamines inside the vesicles prior to their release via exocytosis. Transports a variety of catecholamines such as dopamine, adrenaline and noradrenaline, histamine, and indolamines such as serotonin. Regulates the transvesicular monoaminergic gradient that determines the quantal size. Mediates somatodendritic dopamine release in hippocampal neurons, likely as part of a regulated secretory pathway that integrates retrograde synaptic signals. Acts as a primary transporter for striatal dopamine loading ensuring impulse-dependent release of dopamine at the synaptic cleft. Responsible for histamine and serotonin storage and subsequent corelease from mast cell granules. The chain is Synaptic vesicular amine transporter (SLC18A2) from Homo sapiens (Human).